Here is a 436-residue protein sequence, read N- to C-terminus: Histidine--tRNA ligase (436 aa).

Belongs to the class-II aminoacyl-tRNA synthetase family. In terms of assembly, homodimer.

The protein resides in the cytoplasm. The enzyme catalyses tRNA(His) + L-histidine + ATP = L-histidyl-tRNA(His) + AMP + diphosphate + H(+). In Psychrobacter sp. (strain PRwf-1), this protein is Histidine--tRNA ligase.